We begin with the raw amino-acid sequence, 217 residues long: 2-phospho-L-lactate guanylyltransferase (217 aa).

Belongs to the CofC family. In terms of assembly, homodimer.

It catalyses the reaction (2S)-2-phospholactate + GTP + H(+) = (2S)-lactyl-2-diphospho-5'-guanosine + diphosphate. It participates in cofactor biosynthesis; coenzyme F420 biosynthesis. In terms of biological role, guanylyltransferase that catalyzes the activation of (2S)-2-phospholactate (2-PL) as (2S)-lactyl-2-diphospho-5'-guanosine, via the condensation of 2-PL with GTP. It is involved in the biosynthesis of coenzyme F420, a hydride carrier cofactor. In Halorubrum lacusprofundi (strain ATCC 49239 / DSM 5036 / JCM 8891 / ACAM 34), this protein is 2-phospho-L-lactate guanylyltransferase.